A 427-amino-acid polypeptide reads, in one-letter code: Inward rectifier potassium channel 2 (427 aa).

Residues 1–81 are Cytoplasmic-facing; the sequence is MGSVRTNRYS…IFTTCVDIRW (81 aa). Position 76 is an S-nitrosocysteine (cysteine 76). Residues 82-106 form a helical membrane-spanning segment; that stretch reads RWMLVIFCLAFVLSWLFFGCVFWLI. Over 107–128 the chain is Extracellular; sequence ALLHGDLDASKESKACVSEVNS. Residues 129–140 constitute an intramembrane region (helical; Pore-forming); that stretch reads FTAAFLFSIETQ. Residues 141–147 constitute an intramembrane region (pore-forming); the sequence is TTIGYGF. The short motif at 142–147 is the Selectivity filter element; that stretch reads TIGYGF. The Extracellular portion of the chain corresponds to 148-156; the sequence is RCVTDECPI. A helical membrane pass occupies residues 157–178; that stretch reads AVFMVVFQSIVGCIIDAFIIGA. The Cytoplasmic segment spans residues 179–427; sequence VMAKMAKPKK…PRPLRRESEI (249 aa). The tract at residues 181 to 208 is polyphosphoinositide (PIP2)-binding; it reads AKMAKPKKRNETLVFSHNAVIAMRDGKL. Residues 383–427 form a disordered region; it reads TSKEEEDSENGVPESTSTDSPPGIDLHNQASVPLEPRPLRRESEI. Residues 425-427 carry the PDZ-binding motif; that stretch reads SEI.

The protein belongs to the inward rectifier-type potassium channel (TC 1.A.2.1) family. KCNJ2 subfamily. Homotetramer. Homomultimeric and heteromultimeric association with KCNJ4/Kir2.3. Can form heteromeric channels with Kir2.6/KCNJ18. Associates, via its PDZ-recognition domain, with a complex containing LIN7A, LIN7B, LIN7C, DLG1, CASK and APBA1. Post-translationally, S-nitrosylation increases the open probability and inward rectifying currents. Prominently expressed in the central nervous system. Also found in other excitable tissues such as heart and skeletal muscle.

The protein localises to the cell membrane. It is found in the sarcolemma. It localises to the T-tubule. It carries out the reaction K(+)(in) = K(+)(out). With respect to regulation, activated by phosphatidylinositol 4,5 biphosphate (PtdIns(4,5)P2). Functionally, inward rectifier potassium channels are characterized by a greater tendency to allow potassium to flow into the cell rather than out of it. Their voltage dependence is regulated by the concentration of extracellular potassium; as external potassium is raised, the voltage range of the channel opening shifts to more positive voltages. The inward rectification is mainly due to the blockage of outward current by internal magnesium. Can be blocked by extracellular barium and cesium. Probably participates in establishing action potential waveform and excitability of neuronal and muscle tissues. This Rattus norvegicus (Rat) protein is Inward rectifier potassium channel 2 (Kcnj2).